Here is a 317-residue protein sequence, read N- to C-terminus: Melanocyte-stimulating hormone receptor (317 aa).

Residues 1 to 37 (MPVQGSQRRLLGSLNSTPTATPKLGLAANQTGAQCLE) are Extracellular-facing. N29 is a glycosylation site (N-linked (GlcNAc...) asparagine). The helical transmembrane segment at 38–63 (VSIPDGLFLSLGLVSLVENVLVVAAI) threads the bilayer. Over 64-72 (ARNRNLHSP) the chain is Cytoplasmic. The chain crosses the membrane as a helical span at residues 73-93 (MYCFICCLALSDLLVSGSNML). At 94–118 (ETAVILLLEAGALAARAAVVQQLDN) the chain is on the extracellular side. A helical transmembrane segment spans residues 119–140 (VIDVITCSSMLSSLCFLGAIAM). Over 141-163 (DRYISIFYALRYHSIVTLPRARG) the chain is Cytoplasmic. The chain crosses the membrane as a helical span at residues 164 to 183 (VVAAIWVASILFSTLFIAYY). The Extracellular segment spans residues 184 to 191 (DHVAVLLC). The chain crosses the membrane as a helical span at residues 192-211 (LVVFFLAMLVLMAVLYVHML). The Cytoplasmic portion of the chain corresponds to 212–240 (ARACQHAQGIAQLHKRQRPAHQGVGLKGA). The chain crosses the membrane as a helical span at residues 241-266 (ATLTILLGIFFLCWGPFFLHLTLIVL). Topologically, residues 267-279 (CPQHPTCSCIFKN) are extracellular. Residues 280–300 (FNLFLALIICNAIIDPLIYAF) traverse the membrane as a helical segment. The Cytoplasmic segment spans residues 301–317 (RSQELRRTLKKVLLCSW). A lipid anchor (S-palmitoyl cysteine) is attached at C315.

This sequence belongs to the G-protein coupled receptor 1 family. Interacts with MGRN1, but does not undergo MGRN1-mediated ubiquitination; this interaction competes with GNAS-binding and thus inhibits agonist-induced cAMP production. Interacts with OPN3; the interaction results in a decrease in MC1R-mediated cAMP signaling and ultimately a decrease in melanin production in melanocytes.

The protein localises to the cell membrane. Receptor for MSH (alpha, beta and gamma) and ACTH. The activity of this receptor is mediated by G proteins which activate adenylate cyclase. Mediates melanogenesis, the production of eumelanin (black/brown) and phaeomelanin (red/yellow), via regulation of cAMP signaling in melanocytes. In Presbytis comata (Grizzled leaf monkey), this protein is Melanocyte-stimulating hormone receptor (MC1R).